The primary structure comprises 358 residues: uncharacterized protein (358 aa).

The interval 324-358 is disordered; sequence DMEVEETPPTTNKDLPRGATQPKRNSIKRVSKLID. The segment covering 348–358 has biased composition (basic residues); it reads NSIKRVSKLID.

This is an uncharacterized protein from Mycoplasma pneumoniae (strain ATCC 29342 / M129 / Subtype 1) (Mycoplasmoides pneumoniae).